The sequence spans 174 residues: Large ribosomal subunit protein uL15 (174 aa).

2 disordered regions span residues 1-57 and 147-174; these read MKLH…QMRI and PWVV…PQKA. Residues 21 to 35 show a composition bias toward gly residues; it reads RGIGSGKGKTGGKGM.

It belongs to the universal ribosomal protein uL15 family. As to quaternary structure, part of the 50S ribosomal subunit.

In terms of biological role, binds to the 23S rRNA. The sequence is that of Large ribosomal subunit protein uL15 from Roseiflexus sp. (strain RS-1).